A 150-amino-acid polypeptide reads, in one-letter code: Small ribosomal subunit protein uS13 (150 aa).

The segment at 131–150 (QRTKSTFRRGPTVGVSRRKK) is disordered.

The protein belongs to the universal ribosomal protein uS13 family. In terms of assembly, part of the 30S ribosomal subunit. Forms a loose heterodimer with protein S19. Forms two bridges to the 50S subunit in the 70S ribosome.

Functionally, located at the top of the head of the 30S subunit, it contacts several helices of the 16S rRNA. In the 70S ribosome it contacts the 23S rRNA (bridge B1a) and protein L5 of the 50S subunit (bridge B1b), connecting the 2 subunits; these bridges are implicated in subunit movement. This Methanocaldococcus jannaschii (strain ATCC 43067 / DSM 2661 / JAL-1 / JCM 10045 / NBRC 100440) (Methanococcus jannaschii) protein is Small ribosomal subunit protein uS13.